The following is a 468-amino-acid chain: Alcohol dehydrogenase (quinone), cytochrome c subunit (468 aa).

The N-terminal stretch at 1–23 is a signal peptide; that stretch reads MINRLKVTFSAAAFSLLAGTALA. 3 consecutive Cytochrome c domains span residues 31-134, 178-293, and 317-407; these read ALVQ…MHGV, PEIA…KSLP, and TASV…RTSW. Residues C45, C48, H49, C193, C196, H197, C330, C333, and H334 each contribute to the heme c site.

As to quaternary structure, the alcohol dehydrogenase multicomponent enzyme system is composed of a dehydrogenase subunit I (AdhA) and a cytochrome c subunit II (AdhB). Heme c serves as cofactor.

Its subcellular location is the cell membrane. It carries out the reaction ethanol + a ubiquinone = a ubiquinol + acetaldehyde. Cytochrome c component of the alcohol dehydrogenase multicomponent enzyme system which is involved in the production of acetic acid and in the ethanol oxidase respiratory chain. Quinohemoprotein alcohol dehydrogenase (ADH) catalyzes the oxidation of ethanol to acetaldehyde by transferring electrons to the ubiquinone embedded in the membrane phospholipids. The electrons transfer from ethanol to membranous ubiquinone occurs from pyrroloquinoline quinone (PQQ) to one heme c in subunit I (AdhA), and finally to two heme c in subunit II (AdhB). Besides ubiquinone reduction, ADH also has a ubiquinol (QH2) oxidation reaction which mediates electron transfer from ubiquinol to the non-energy generating bypass oxidase system. The electrons transfer occurs from ubiquinol (QH2) to the additional heme c within subunit II (AdhB). This chain is Alcohol dehydrogenase (quinone), cytochrome c subunit, found in Gluconacetobacter polyoxogenes (Acetobacter polyoxogenes).